Reading from the N-terminus, the 499-residue chain is Protein NODULATION SIGNALING PATHWAY 2 (499 aa).

The disordered stretch occupies residues 64 to 106; the sequence is NNTGPAFSDHTASTTSEEEEEEEATTTTMTTTTTTTTTTPEAA. The span at 88–104 shows a compositional bias: low complexity; it reads TTTTMTTTTTTTTTTPE. Residues 106-491 form the GRAS domain; the sequence is ADDDFKGLRL…RRLLSASLWT (386 aa). Residues 113–182 are leucine repeat I (LRI); the sequence is LRLVHLLMAG…AGGAYNSSSK (70 aa). The interval 201 to 265 is VHIID; the sequence is FQLLQDMSPY…PNGPHLRITA (65 aa). The VHIID motif lies at 232–236; the sequence is VHIVD. Residues 281–313 form a leucine repeat II (LRII) region; sequence ETGRRLTAFATSLGQPFSFHHSRLESDETFRPA. The segment at 323-414 is PFYRE; it reads LVFNCMLNLP…RVFLGPRIVG (92 aa). The interval 417 to 491 is SAW; the sequence is ARIYRTGGGG…RRLLSASLWT (75 aa).

This sequence belongs to the GRAS family. In terms of assembly, interacts with IPN2. Binds to RAD1. Interacts with RAM1. As to expression, highly expressed in roots.

The protein resides in the nucleus membrane. It localises to the endoplasmic reticulum. Transcriptional regulator essential for Nod-factor-induced gene expression. Acts downstream of calcium spiking and a calcium/calmodulin-dependent protein kinase required for activation of early nodulation gene expression. Transcription factor involved in the induction of NIN and ENOD40 genes, which are required for rhizobial infection and early nodule development. Does not seem to contribute to the early steps of the arbuscular mycorrhizal fungus infection and colonization processes in roots. Transcription factor involved in the positive regulation of the beta-carotene isomerase D27, which participates in a pathway leading to biosynthesis of strigolactones in roots. This chain is Protein NODULATION SIGNALING PATHWAY 2, found in Lotus japonicus (Lotus corniculatus var. japonicus).